The following is a 208-amino-acid chain: N-(5'-phosphoribosyl)anthranilate isomerase (208 aa).

This sequence belongs to the TrpF family.

It carries out the reaction N-(5-phospho-beta-D-ribosyl)anthranilate = 1-(2-carboxyphenylamino)-1-deoxy-D-ribulose 5-phosphate. It participates in amino-acid biosynthesis; L-tryptophan biosynthesis; L-tryptophan from chorismate: step 3/5. This Desulforamulus reducens (strain ATCC BAA-1160 / DSM 100696 / MI-1) (Desulfotomaculum reducens) protein is N-(5'-phosphoribosyl)anthranilate isomerase.